Consider the following 170-residue polypeptide: Non-specific lipid transfer protein GPI-anchored 5 (170 aa).

Residues 1-24 (MKMEMGLVFLTVFMAVMSSTMVSA) form the signal peptide. 4 cysteine pairs are disulfide-bonded: Cys-28/Cys-69, Cys-38/Cys-53, Cys-54/Cys-95, and Cys-67/Cys-105. 4 N-linked (GlcNAc...) asparagine glycosylation sites follow: Asn-45, Asn-84, Asn-124, and Asn-130. Residues 105–148 (CNTGGGGGGSTSDSPAESPNSSGPGNGSKTVPVGEGDGPPSSDG) form a disordered region. Ser-146 carries the GPI-anchor amidated serine lipid modification. Positions 147-170 (DGSSIKFSFPLIAFFSAVSYMAIF) are cleaved as a propeptide — removed in mature form.

It belongs to the plant LTP family. In terms of tissue distribution, expressed in seedlings, preferentially in the endodermis of hypocotyls and roots, as well as in anthers, sepals and flower tori.

The protein resides in the cell membrane. Its function is as follows. Lipid transfer protein involved in seed and ovule maturation and development, probably by regulating the fatty acids homeostasis during suberin and sporopollenin biosynthesis or deposition. Contributes to pre-invasive defense against some non-host powdery mildew pathogens by preventing the penetration of the epidermal cell wall by the fungal agents (e.g. Blumeria graminis f. sp. hordei (Bgh)). The protein is Non-specific lipid transfer protein GPI-anchored 5 of Arabidopsis thaliana (Mouse-ear cress).